The following is a 179-amino-acid chain: Alpha-tubulin N-acetyltransferase (179 aa).

The N-acetyltransferase domain maps to 1–175 (MRVEVVRAPG…NRFVVFDAYF (175 aa)). Acetyl-CoA is bound by residues 109 to 122 (FYVD…GVGL) and 145 to 154 (SPKLFAFLKK).

The protein belongs to the acetyltransferase ATAT1 family.

The enzyme catalyses L-lysyl-[alpha-tubulin] + acetyl-CoA = N(6)-acetyl-L-lysyl-[alpha-tubulin] + CoA + H(+). Functionally, specifically acetylates 'Lys-40' in alpha-tubulin on the lumenal side of microtubules. Promotes microtubule destabilization and accelerates microtubule dynamics; this activity may be independent of acetylation activity. Acetylates alpha-tubulin with a slow enzymatic rate, due to a catalytic site that is not optimized for acetyl transfer. Enters the microtubule through each end and diffuses quickly throughout the lumen of microtubules. Acetylates only long/old microtubules because of its slow acetylation rate since it does not have time to act on dynamically unstable microtubules before the enzyme is released. The protein is Alpha-tubulin N-acetyltransferase of Phytophthora infestans (strain T30-4) (Potato late blight agent).